A 163-amino-acid polypeptide reads, in one-letter code: 6,7-dimethyl-8-ribityllumazine synthase (163 aa).

Residues Phe27, 58–60 (ALE), and 87–89 (CVV) contribute to the 5-amino-6-(D-ribitylamino)uracil site. Residue 92–93 (DT) coordinates (2S)-2-hydroxy-3-oxobutyl phosphate. His95 acts as the Proton donor in catalysis. Position 120 (Asn120) interacts with 5-amino-6-(D-ribitylamino)uracil. Arg134 provides a ligand contact to (2S)-2-hydroxy-3-oxobutyl phosphate.

Belongs to the DMRL synthase family.

It catalyses the reaction (2S)-2-hydroxy-3-oxobutyl phosphate + 5-amino-6-(D-ribitylamino)uracil = 6,7-dimethyl-8-(1-D-ribityl)lumazine + phosphate + 2 H2O + H(+). The protein operates within cofactor biosynthesis; riboflavin biosynthesis; riboflavin from 2-hydroxy-3-oxobutyl phosphate and 5-amino-6-(D-ribitylamino)uracil: step 1/2. In terms of biological role, catalyzes the formation of 6,7-dimethyl-8-ribityllumazine by condensation of 5-amino-6-(D-ribitylamino)uracil with 3,4-dihydroxy-2-butanone 4-phosphate. This is the penultimate step in the biosynthesis of riboflavin. This chain is 6,7-dimethyl-8-ribityllumazine synthase, found in Nitrobacter winogradskyi (strain ATCC 25391 / DSM 10237 / CIP 104748 / NCIMB 11846 / Nb-255).